A 367-amino-acid chain; its full sequence is N-acetylmuramoyl-L-alanine amidase BlyA (367 aa).

One can recognise an N-acetylmuramoyl-L-alanine amidase domain in the interval 24–158 (VKKCVLHYTA…DITHKNCPAP (135 aa)). The interval 178 to 204 (SGKSVSKASPTKPTTSSPSSSSAVSGS) is disordered. Residues 180-204 (KSVSKASPTKPTTSSPSSSSAVSGS) are compositionally biased toward low complexity. SH3b domains lie at 202 to 271 (SGSL…YVDV) and 298 to 367 (GKIK…GSTI).

This sequence belongs to the N-acetylmuramoyl-L-alanine amidase 2 family.

The protein resides in the secreted. The catalysed reaction is Hydrolyzes the link between N-acetylmuramoyl residues and L-amino acid residues in certain cell-wall glycopeptides.. In terms of biological role, autolysins are involved in some important biological processes such as cell separation, cell-wall turnover, competence for genetic transformation, formation of the flagella and sporulation. Involved in prophage SP-beta-mediated cell lysis. The sequence is that of N-acetylmuramoyl-L-alanine amidase BlyA (blyA) from Bacillus subtilis (strain 168).